We begin with the raw amino-acid sequence, 514 residues long: Sugar transport protein 4 (514 aa).

At 1–22 (MAGGFVSQTPGVRNYNYKLTPK) the chain is on the cytoplasmic side. The next 12 helical transmembrane spans lie at 23 to 43 (VFVTCFIGAFGGLIFGYDLGI), 80 to 100 (LLTLFTSSLYVAALVSSLFAS), 117 to 137 (FTFFIGSAFNGFAQNIAMLLI), 140 to 160 (ILLGFGVGFANQSVPVYLSEM), 172 to 192 (GFQVAIIFGIVVATIINYFTA), 202 to 222 (ISLGLACVPAVMIMIGALILP), 283 to 303 (LIMTCFIPFFQQLTGINVITF), 321 to 341 (LSAMVTGIIELLCTFVSVFTV), 348 to 368 (ILFLQGGIQMLVSQIAIGAMI), 387 to 407 (LIVALICIYVAGFAWSWGPLG), 426 to 446 (INVSVNMFFTFLVAQLFLTML), and 451 to 471 (FGLFFFFAFFVVIMTIFIYLM). Residues 472–514 (LPETKNVPIEEMNRVWKAHWFWGKFIPDEAVNMGAAEMQQKSV) lie on the Cytoplasmic side of the membrane.

It belongs to the major facilitator superfamily. Sugar transporter (TC 2.A.1.1) family. Mostly in flowers and roots, especially in anthers, including pollen, and root tips. Also present in some hydathodes.

The protein resides in the cell membrane. Mediates an active uptake of hexoses, probably by sugar/hydrogen symport. Can transport glucose, methylglucose, galactose, xylose and mannose, but not fructose. The protein is Sugar transport protein 4 (STP4) of Arabidopsis thaliana (Mouse-ear cress).